Here is a 383-residue protein sequence, read N- to C-terminus: ATP phosphoribosyltransferase regulatory subunit (383 aa).

It belongs to the class-II aminoacyl-tRNA synthetase family. HisZ subfamily. As to quaternary structure, heteromultimer composed of HisG and HisZ subunits.

Its subcellular location is the cytoplasm. It participates in amino-acid biosynthesis; L-histidine biosynthesis; L-histidine from 5-phospho-alpha-D-ribose 1-diphosphate: step 1/9. Required for the first step of histidine biosynthesis. May allow the feedback regulation of ATP phosphoribosyltransferase activity by histidine. The chain is ATP phosphoribosyltransferase regulatory subunit from Chromobacterium violaceum (strain ATCC 12472 / DSM 30191 / JCM 1249 / CCUG 213 / NBRC 12614 / NCIMB 9131 / NCTC 9757 / MK).